Consider the following 179-residue polypeptide: MNRLKERYNTEVTENLVKKFNYSSVMEVPKIEKIVVNMGVGDAVQNSKVLDNAVEELELITGQKPLVTKAKKSVATFRLREGMPIGAKVTLRGERMYEFLDKLIAVSLPRVRDFQGVSKTAFDGRGNYTLGIKEQLIFPEIDYDKVSKVRGMDIVIVTTANTDEEARELLTNFGMPFRK.

It belongs to the universal ribosomal protein uL5 family. In terms of assembly, part of the 50S ribosomal subunit; part of the 5S rRNA/L5/L18/L25 subcomplex. Contacts the 5S rRNA and the P site tRNA. Forms a bridge to the 30S subunit in the 70S ribosome.

Functionally, this is one of the proteins that bind and probably mediate the attachment of the 5S RNA into the large ribosomal subunit, where it forms part of the central protuberance. In the 70S ribosome it contacts protein S13 of the 30S subunit (bridge B1b), connecting the 2 subunits; this bridge is implicated in subunit movement. Contacts the P site tRNA; the 5S rRNA and some of its associated proteins might help stabilize positioning of ribosome-bound tRNAs. This Staphylococcus haemolyticus (strain JCSC1435) protein is Large ribosomal subunit protein uL5.